A 410-amino-acid polypeptide reads, in one-letter code: Maintenance of mitochondrial morphology protein 1 (410 aa).

Over 1-19 (MTPDSCPVRPEPTLSFTQG) the chain is Lumenal. Residues 20–40 (LIVGQISVVFLIAAFIKFFIF) form a helical membrane-spanning segment. Residues 41–410 (GDPPSAEETA…PMPGSLAVDD (370 aa)) are Cytoplasmic-facing. The span at 71–87 (LRTSNQRPGSQQQQSVL) shows a compositional bias: polar residues. A disordered region spans residues 71–98 (LRTSNQRPGSQQQQSVLNRKKSSILRSG). In terms of domain architecture, SMP-LTD spans 119-335 (QPESLDWFNV…EPRFQEIPLP (217 aa)). Positions 380–410 (ARQAAQRDSLRYRRPRADDAFPMPGSLAVDD) are disordered. Residues 387–398 (DSLRYRRPRADD) show a composition bias toward basic and acidic residues.

This sequence belongs to the MMM1 family. As to quaternary structure, homodimer. Component of the ER-mitochondria encounter structure (ERMES) or MDM complex, composed of MMM1, MDM10, MDM12 and MDM34. An MMM1 homodimer associates with one molecule of MDM12 on each side in a pairwise head-to-tail manner, and the SMP-LTD domains of MMM1 and MDM12 generate a continuous hydrophobic tunnel for phospholipid trafficking.

It is found in the endoplasmic reticulum membrane. Component of the ERMES/MDM complex, which serves as a molecular tether to connect the endoplasmic reticulum (ER) and mitochondria. Components of this complex are involved in the control of mitochondrial shape and protein biogenesis, and function in nonvesicular lipid trafficking between the ER and mitochondria. The MDM12-MMM1 subcomplex functions in the major beta-barrel assembly pathway that is responsible for biogenesis of all outer membrane beta-barrel proteins, and acts in a late step after the SAM complex. The MDM10-MDM12-MMM1 subcomplex further acts in the TOM40-specific pathway after the action of the MDM12-MMM1 complex. Essential for establishing and maintaining the structure of mitochondria and maintenance of mtDNA nucleoids. This is Maintenance of mitochondrial morphology protein 1 from Pyricularia oryzae (strain 70-15 / ATCC MYA-4617 / FGSC 8958) (Rice blast fungus).